The following is a 259-amino-acid chain: Uridylate kinase (259 aa).

10–13 provides a ligand contact to ATP; it reads KLSG. Position 52 (Gly52) interacts with UMP. Gly53 and Arg57 together coordinate ATP. UMP is bound by residues Asp72 and 134–141; that span reads NGQPFLTT. Residues Tyr168 and Asp171 each coordinate ATP. The segment at 236-259 is disordered; the sequence is ISSSPEKSEEFGNEVLASPAESTA.

Belongs to the UMP kinase family. Homohexamer.

It is found in the cytoplasm. The catalysed reaction is UMP + ATP = UDP + ADP. Its pathway is pyrimidine metabolism; CTP biosynthesis via de novo pathway; UDP from UMP (UMPK route): step 1/1. With respect to regulation, inhibited by UTP. Its function is as follows. Catalyzes the reversible phosphorylation of UMP to UDP. This chain is Uridylate kinase, found in Frankia casuarinae (strain DSM 45818 / CECT 9043 / HFP020203 / CcI3).